The chain runs to 466 residues: Asparagine--tRNA ligase (466 aa).

It belongs to the class-II aminoacyl-tRNA synthetase family. Homodimer.

It localises to the cytoplasm. It catalyses the reaction tRNA(Asn) + L-asparagine + ATP = L-asparaginyl-tRNA(Asn) + AMP + diphosphate + H(+). The protein is Asparagine--tRNA ligase of Shewanella baltica (strain OS155 / ATCC BAA-1091).